A 324-amino-acid polypeptide reads, in one-letter code: Phospho-N-acetylmuramoyl-pentapeptide-transferase (324 aa).

10 consecutive transmembrane segments (helical) span residues 5-25 (IIVIAMAVSFLITVILSPLFI), 52-72 (PTMGGIMILLSIIATTVWVTA), 76-96 (VLSAGTYLLLFVTIGYGVLGF), 117-137 (FIGQLIIAVIFFFVYRQSGFS), 147-167 (WSFDLGWAYGVLLLFMLVGGS), 176-196 (LDGLLAGTAAIAFGAYAVLAW), 203-223 (VAVFCVAVVGAVLGFLVFNAH), 227-247 (VFMGDTGSLALGGAIAAVAVL), 250-270 (LELLLVVIGGVFVIETLSVII), and 302-322 (IVVTFWAVGLLFAMLGIYIEV).

Belongs to the glycosyltransferase 4 family. MraY subfamily. Mg(2+) is required as a cofactor.

The protein resides in the cell membrane. It carries out the reaction UDP-N-acetyl-alpha-D-muramoyl-L-alanyl-gamma-D-glutamyl-meso-2,6-diaminopimeloyl-D-alanyl-D-alanine + di-trans,octa-cis-undecaprenyl phosphate = di-trans,octa-cis-undecaprenyl diphospho-N-acetyl-alpha-D-muramoyl-L-alanyl-D-glutamyl-meso-2,6-diaminopimeloyl-D-alanyl-D-alanine + UMP. The protein operates within cell wall biogenesis; peptidoglycan biosynthesis. Its function is as follows. Catalyzes the initial step of the lipid cycle reactions in the biosynthesis of the cell wall peptidoglycan: transfers peptidoglycan precursor phospho-MurNAc-pentapeptide from UDP-MurNAc-pentapeptide onto the lipid carrier undecaprenyl phosphate, yielding undecaprenyl-pyrophosphoryl-MurNAc-pentapeptide, known as lipid I. The sequence is that of Phospho-N-acetylmuramoyl-pentapeptide-transferase from Geobacillus thermodenitrificans (strain NG80-2).